The sequence spans 275 residues: 4-deoxy-L-threo-5-hexosulose-uronate ketol-isomerase (275 aa).

The Zn(2+) site is built by histidine 193, histidine 195, glutamate 200, and histidine 242.

This sequence belongs to the KduI family. It depends on Zn(2+) as a cofactor.

The enzyme catalyses 5-dehydro-4-deoxy-D-glucuronate = 3-deoxy-D-glycero-2,5-hexodiulosonate. It participates in glycan metabolism; pectin degradation; 2-dehydro-3-deoxy-D-gluconate from pectin: step 4/5. Catalyzes the isomerization of 5-dehydro-4-deoxy-D-glucuronate to 3-deoxy-D-glycero-2,5-hexodiulosonate. This is 4-deoxy-L-threo-5-hexosulose-uronate ketol-isomerase from Bacillus pumilus (strain SAFR-032).